Reading from the N-terminus, the 891-residue chain is Transportin-1 (891 aa).

HEAT repeat units lie at residues 14 to 40 (GLRE…QQLQ), 45 to 83 (FPDF…ATFS), 92 to 125 (YVKS…IVRV), 131 to 168 (LFQA…LDVD), 178 to 208 (NVFM…QYIV), 221 to 248 (YLQG…VQLI), 260 to 287 (KNVT…FWSA), 303 to 381 (PRLI…LSNV), 389 to 420 (TLMP…GAIA), 432 to 459 (PQIV…TLSR), 477 to 510 (FDKI…EEEA), 518 to 551 (LGII…ADAV), 559 to 597 (KYLD…QALG), 605 to 653 (EPVF…GLGA), 664 to 695 (LRDI…RVCP), 703 to 740 (QEFL…IKIG), 748 to 784 (ITVV…WVCP), 792 to 825 (DHFM…VAAN), and 834 to 866 (TFIC…KQML). An Importin N-terminal domain is found at 35-103 (IWQQLQHYSQ…KSELLPCIGA (69 aa)). Residues 317–330 (DDDESLADAEEDES) are compositionally biased toward acidic residues. A disordered region spans residues 317–337 (DDDESLADAEEDESFPDRDQD).

This sequence belongs to the importin beta family. Importin beta-2 subfamily.

It is found in the cytoplasm. It localises to the nucleus. Its subcellular location is the nucleoplasm. Its function is as follows. Functions in nuclear protein import as nuclear transport receptor. Serves as receptor for nuclear localization signals (NLS) in cargo substrates. Is thought to mediate docking of the importin/substrate complex to the nuclear pore complex (NPC) through binding to nucleoporin and the complex is subsequently translocated through the pore by an energy requiring, Ran-dependent mechanism. At the nucleoplasmic side of the NPC, Ran binds to the importin, the importin/substrate complex dissociates and importin is re-exported from the nucleus to the cytoplasm where GTP hydrolysis releases Ran. The directionality of nuclear import is thought to be conferred by an asymmetric distribution of the GTP- and GDP-bound forms of Ran between the cytoplasm and nucleus. The chain is Transportin-1 (TRN1) from Oryza sativa subsp. japonica (Rice).